The following is a 498-amino-acid chain: MRTNPTTSRPGVSTIEEKSVGRIDQIIGPVLDITFPPGKLPYIYNALIVKSRDTADKQINVTCEVQQLLGNNRVRAVAMSATDGLMRGMEVIDTGTPLSVPVGGATLGRIFNVLGEPIDNLGPVDTSATFPIHRSAPAFIELDTKLSIFETGIKVVDLLAPYRRGGKIGLFGGAGVGKTVLIMELINNIAKAHGGVSVFGGVGERTREGNDLYMEMKESGVINEKNIEESKVALVYGQMNEPPGARMRVGLTALTMAEYFRDVNKQDVLLFIDNIFRFVQAGSEVSALLGRMPSAVGYQPTLSTEMGSLQERITSTKKGSITSIQAVYVPADDLTDPAPATTFAHLDATTVLSRGLASKGIYPAVDPLDSTSTMLQPRIVGNEHYETAQRVKETLQRYKELQDIIAILGLDELSEEDRLTVARARKIERFLSQPFFVAEVFTGSPGKYVGLAETIRGFQLILSGELDGLPEQAFYLVGNIDEASTKAINLEEESKLKK.

Residue 172-179 (GGAGVGKT) coordinates ATP.

This sequence belongs to the ATPase alpha/beta chains family. As to quaternary structure, F-type ATPases have 2 components, CF(1) - the catalytic core - and CF(0) - the membrane proton channel. CF(1) has five subunits: alpha(3), beta(3), gamma(1), delta(1), epsilon(1). CF(0) has four main subunits: a(1), b(1), b'(1) and c(9-12).

Its subcellular location is the plastid. The protein localises to the chloroplast thylakoid membrane. The catalysed reaction is ATP + H2O + 4 H(+)(in) = ADP + phosphate + 5 H(+)(out). Produces ATP from ADP in the presence of a proton gradient across the membrane. The catalytic sites are hosted primarily by the beta subunits. The polypeptide is ATP synthase subunit beta, chloroplastic (Sorghum bicolor (Sorghum)).